The primary structure comprises 156 residues: Ribosomal RNA large subunit methyltransferase H (156 aa).

S-adenosyl-L-methionine-binding positions include L73, G104, and 123–128; that span reads LSKLTL.

The protein belongs to the RNA methyltransferase RlmH family. As to quaternary structure, homodimer.

The protein localises to the cytoplasm. It catalyses the reaction pseudouridine(1915) in 23S rRNA + S-adenosyl-L-methionine = N(3)-methylpseudouridine(1915) in 23S rRNA + S-adenosyl-L-homocysteine + H(+). Specifically methylates the pseudouridine at position 1915 (m3Psi1915) in 23S rRNA. The chain is Ribosomal RNA large subunit methyltransferase H from Idiomarina loihiensis (strain ATCC BAA-735 / DSM 15497 / L2-TR).